A 441-amino-acid chain; its full sequence is Keratin, type I cytoskeletal 15 (441 aa).

The tract at residues 2-91 (LLLGHASTST…GGSDLLLGTS (90 aa)) is head. The tract at residues 92 to 127 (GKEAMQNLNDRLASYLDKVRSLEGKNHELELKIKDW) is coil 1A. An IF rod domain is found at 92 to 407 (GKEAMQNLND…MLLDSEDSKG (316 aa)). The linker 1 stretch occupies residues 128 to 149 (YSQVIPGTGGPDARDYGHLEKE). Residues 150 to 241 (IEDLQNKVNN…KNHEEDMKAA (92 aa)) are coil 1B. The linker 12 stretch occupies residues 242–261 (SSGIAGQVNVELDAAPGTNL). Residues 262–403 (LDELDACRRD…ATYRMLLDSE (142 aa)) form a coil 2 region. The tail stretch occupies residues 404–441 (DSKGSIINHKILTAIEKLVDGIVLSTEVLEKQIPVLSY).

The protein belongs to the intermediate filament family. As to quaternary structure, heterotetramer of two type I and two type II keratins. In terms of tissue distribution, expressed in skin.

The chain is Keratin, type I cytoskeletal 15 (KRT15) from Protopterus aethiopicus (Marbled lungfish).